The chain runs to 90 residues: Sec-independent protein translocase protein TatA (90 aa).

A helical membrane pass occupies residues 1–21; that stretch reads MGISPWTLLIVLLIVLLVFGT. Composition is skewed to basic and acidic residues over residues 42–59 and 70–90; these read MKEG…EPSK and SGEG…RHSS. The disordered stretch occupies residues 42-90; it reads MKEGEEGAKEGEKSEPSKLEQPPEEEKESGEGHTIEGERSEQPRDRHSS.

Belongs to the TatA/E family. As to quaternary structure, the Tat system comprises two distinct complexes: a TatABC complex, containing multiple copies of TatA, TatB and TatC subunits, and a separate TatA complex, containing only TatA subunits. Substrates initially bind to the TatABC complex, which probably triggers association of the separate TatA complex to form the active translocon.

It is found in the cell inner membrane. Its function is as follows. Part of the twin-arginine translocation (Tat) system that transports large folded proteins containing a characteristic twin-arginine motif in their signal peptide across membranes. TatA could form the protein-conducting channel of the Tat system. The sequence is that of Sec-independent protein translocase protein TatA from Alkalilimnicola ehrlichii (strain ATCC BAA-1101 / DSM 17681 / MLHE-1).